The chain runs to 186 residues: Elongation factor P (186 aa).

Belongs to the elongation factor P family.

The protein resides in the cytoplasm. It functions in the pathway protein biosynthesis; polypeptide chain elongation. Involved in peptide bond synthesis. Stimulates efficient translation and peptide-bond synthesis on native or reconstituted 70S ribosomes in vitro. Probably functions indirectly by altering the affinity of the ribosome for aminoacyl-tRNA, thus increasing their reactivity as acceptors for peptidyl transferase. This is Elongation factor P from Shewanella sp. (strain W3-18-1).